The sequence spans 97 residues: Co-chaperonin GroES (97 aa).

This sequence belongs to the GroES chaperonin family. In terms of assembly, heptamer of 7 subunits arranged in a ring. Interacts with the chaperonin GroEL.

It localises to the cytoplasm. Together with the chaperonin GroEL, plays an essential role in assisting protein folding. The GroEL-GroES system forms a nano-cage that allows encapsulation of the non-native substrate proteins and provides a physical environment optimized to promote and accelerate protein folding. GroES binds to the apical surface of the GroEL ring, thereby capping the opening of the GroEL channel. The chain is Co-chaperonin GroES from Gemmatimonas aurantiaca (strain DSM 14586 / JCM 11422 / NBRC 100505 / T-27).